The chain runs to 273 residues: MKLPTFLIGFVALLVTSNGSARYVYREDPDDSADPPNPGALHANPILIDVDDVQPFPQPRAITDSQKSALVYKPRLYIKSGCHPYPAVQANGSLSDGLQWKNFLRSPCPGSPKGSQVYSRSDWYEGKWAIMYAWYLPRALDRVTWLVNGHRHYWLWVVVWTDSPDPKTSTLLATSMPGVANNIHKYYPPKSKYVIREKTLKVKSYQNHILFIKHGLELTDRAGDFQDLVTWEQMTDEARAALSTFHRPEHAANPPLQDKRFYEVLEKAYPFDR.

The first 21 residues, 1–21 (MKLPTFLIGFVALLVTSNGSA), serve as a signal peptide directing secretion. Residue Asn-91 is glycosylated (N-linked (GlcNAc...) asparagine). A Conserved undecapeptide motif motif is present at residues 129–139 (AIMYAWYLPRA). The short motif at 149-155 (GHRHYWL) is the Conserved heptapeptide motif element.

The protein belongs to the Necrosis inducing protein (NPP1) family.

The protein resides in the secreted. Secreted effector that acts as a pathogen-associated molecular pattern (PAMP) recognized by the plant immune system. Seems not to induce necrosis in Nicotiana benthamiana leaves but significantly improves disease resistance of Arabidopsis thaliana to Hyaloperonospora arabidopsidis and causes an inhibition of plant growth which is typically associated with enhanced immunity when over-expressed in Arabidopsis. The polypeptide is NLP effector protein 10 (Plasmopara viticola (Downy mildew of grapevine)).